A 341-amino-acid polypeptide reads, in one-letter code: 4-hydroxy-2-oxovalerate aldolase (341 aa).

Positions 9–260 (VVITDSTLRD…ATGIDLYRVL (252 aa)) constitute a Pyruvate carboxyltransferase domain. 17–18 (RD) is a substrate binding site. Residue D18 participates in Mn(2+) binding. The active-site Proton acceptor is the H21. The substrate site is built by S172 and H199. H199 and H201 together coordinate Mn(2+).

Belongs to the 4-hydroxy-2-oxovalerate aldolase family.

The catalysed reaction is (S)-4-hydroxy-2-oxopentanoate = acetaldehyde + pyruvate. The sequence is that of 4-hydroxy-2-oxovalerate aldolase from Spirochaeta aurantia.